The following is a 194-amino-acid chain: Adapter protein MecA 2 (194 aa).

This sequence belongs to the MecA family. In terms of assembly, homodimer.

In terms of biological role, enables the recognition and targeting of unfolded and aggregated proteins to the ClpC protease or to other proteins involved in proteolysis. Also involved in Spx degradation by ClpC. Acts negatively in the development of competence by binding ComK and recruiting it to the ClpCP protease. When overexpressed, inhibits sporulation. This is Adapter protein MecA 2 (mecB) from Bacillus subtilis (strain 168).